Here is a 643-residue protein sequence, read N- to C-terminus: Phosphomethylpyrimidine synthase (643 aa).

Substrate-binding positions include asparagine 248, methionine 277, tyrosine 306, histidine 342, 362-364, 403-406, and glutamate 442; these read SRG and DGLR. Zn(2+) is bound at residue histidine 446. Residue tyrosine 469 participates in substrate binding. Histidine 510 is a Zn(2+) binding site. Residues cysteine 590, cysteine 593, and cysteine 598 each contribute to the [4Fe-4S] cluster site.

This sequence belongs to the ThiC family. In terms of assembly, homodimer. It depends on [4Fe-4S] cluster as a cofactor.

The enzyme catalyses 5-amino-1-(5-phospho-beta-D-ribosyl)imidazole + S-adenosyl-L-methionine = 4-amino-2-methyl-5-(phosphooxymethyl)pyrimidine + CO + 5'-deoxyadenosine + formate + L-methionine + 3 H(+). It participates in cofactor biosynthesis; thiamine diphosphate biosynthesis. In terms of biological role, catalyzes the synthesis of the hydroxymethylpyrimidine phosphate (HMP-P) moiety of thiamine from aminoimidazole ribotide (AIR) in a radical S-adenosyl-L-methionine (SAM)-dependent reaction. This is Phosphomethylpyrimidine synthase from Burkholderia pseudomallei (strain 1106a).